We begin with the raw amino-acid sequence, 369 residues long: uncharacterized protein (369 aa).

4 disordered regions span residues 1–42 (MRAA…NNNS), 60–107 (PSDL…KEDD), 146–177 (ALSMGRGDLDSESDISEKEDDNDGSFDGNSSG), and 214–369 (LSSH…GDDD). Polar residues predominate over residues 12-24 (VGPNNNNQSNTIN). 2 stretches are compositionally biased toward low complexity: residues 30-42 (SNSNNINDNNNNS) and 70-86 (YHSNYNNNNNNNNNSSS). The segment covering 87–101 (AITSGTVAPSSSMNN) has biased composition (polar residues). Acidic residues predominate over residues 155 to 169 (DSESDISEKEDDNDG). Residues 219-324 (NNNNNSSNNN…NNNNNNSNIY (106 aa)) are compositionally biased toward low complexity.

This is an uncharacterized protein from Dictyostelium discoideum (Social amoeba).